The primary structure comprises 185 residues: Large ribosomal subunit protein uL5 (185 aa).

It belongs to the universal ribosomal protein uL5 family. In terms of assembly, part of the 50S ribosomal subunit; part of the 5S rRNA/L5/L18/L25 subcomplex. Contacts the 5S rRNA and the P site tRNA. Forms a bridge to the 30S subunit in the 70S ribosome.

Its function is as follows. This is one of the proteins that bind and probably mediate the attachment of the 5S RNA into the large ribosomal subunit, where it forms part of the central protuberance. In the 70S ribosome it contacts protein S13 of the 30S subunit (bridge B1b), connecting the 2 subunits; this bridge is implicated in subunit movement. Contacts the P site tRNA; the 5S rRNA and some of its associated proteins might help stabilize positioning of ribosome-bound tRNAs. In Rhizobium leguminosarum bv. trifolii (strain WSM2304), this protein is Large ribosomal subunit protein uL5.